Here is a 391-residue protein sequence, read N- to C-terminus: DNA/RNA-binding protein KIN17 (391 aa).

The segment at 28 to 50 (CQMCQKQCRDENGFKCHCMSESH) adopts a C2H2-type zinc-finger fold. A winged helix-turn-helix (wHTH) region spans residues 51-160 (QRQLLLASEN…RQLELEKKKK (110 aa)). The residue at position 135 (Lys-135) is an N6,N6,N6-trimethyllysine; by METTL22; alternate. Lys-135 carries the N6-methyllysine; alternate modification. Coiled coils occupy residues 147–180 (ETIR…VRRG) and 252–275 (AKKK…TART). The interval 206–258 (NLNKGAGGSAGATTSKSSSLGPSALKLLGSAASGKRKESSQSSAQPAKKKKSA) is disordered. Positions 282–332 (GIVVKIITKKLGEKYHKKKGVVKEVIDRYTAVVKMTDSGDRLKLDQTHLET) are C-terminal subdomain A. The C-terminal subdomain B stretch occupies residues 338 to 389 (GKRVLVLNGGYRGNEGTLESINEKAFSATIVIETGPLKGRRVEGIQYEDISK).

The protein belongs to the KIN17 family. Associated with DNA polymerase alpha, RFC1 and cyclin A, in multiprotein DNA replication complexes. Also associates with replication origins at the G1/S phase boundary and throughout the S phase in vivo. As to expression, highly expressed in transformed mouse AtT20 neuroendocrine cells. Expressed at a lower level in testis, kidney, skeletal muscle, liver, lung, spleen, brain and heart and kidney. In testis, expressed at much higher levels in proliferating cells than in differentiating cells. Not detected in embryo.

It is found in the nucleus. The protein resides in the cytoplasm. Its function is as follows. Involved in DNA replication and the cellular response to DNA damage. May participate in DNA replication factories and create a bridge between DNA replication and repair mediated by high molecular weight complexes. May play a role in illegitimate recombination and regulation of gene expression. May participate in mRNA processing. Binds, in vitro, to double-stranded DNA. Also shown to bind preferentially to curved DNA in vitro and in vivo. Binds via its C-terminal domain to RNA in vitro. This is DNA/RNA-binding protein KIN17 from Mus musculus (Mouse).